A 369-amino-acid chain; its full sequence is Aminomethyltransferase (369 aa).

The protein belongs to the GcvT family. The glycine cleavage system is composed of four proteins: P, T, L and H.

It catalyses the reaction N(6)-[(R)-S(8)-aminomethyldihydrolipoyl]-L-lysyl-[protein] + (6S)-5,6,7,8-tetrahydrofolate = N(6)-[(R)-dihydrolipoyl]-L-lysyl-[protein] + (6R)-5,10-methylene-5,6,7,8-tetrahydrofolate + NH4(+). Functionally, the glycine cleavage system catalyzes the degradation of glycine. This Synechococcus sp. (strain CC9311) protein is Aminomethyltransferase.